A 267-amino-acid polypeptide reads, in one-letter code: Tryptophan synthase alpha chain (267 aa).

Residues Glu49 and Asp60 each act as proton acceptor in the active site.

This sequence belongs to the TrpA family. As to quaternary structure, tetramer of two alpha and two beta chains.

The catalysed reaction is (1S,2R)-1-C-(indol-3-yl)glycerol 3-phosphate + L-serine = D-glyceraldehyde 3-phosphate + L-tryptophan + H2O. The protein operates within amino-acid biosynthesis; L-tryptophan biosynthesis; L-tryptophan from chorismate: step 5/5. The alpha subunit is responsible for the aldol cleavage of indoleglycerol phosphate to indole and glyceraldehyde 3-phosphate. The protein is Tryptophan synthase alpha chain of Acinetobacter baumannii (strain AB307-0294).